We begin with the raw amino-acid sequence, 165 residues long: Keratin-associated protein 5-7 (165 aa).

Repeat copies occupy residues 35 to 38 (CCVP), 41 to 44 (CCKP), 47 to 50 (CCVP), 116 to 119 (CCKP), 126 to 129 (CCKP), 145 to 148 (CCNP), and 155 to 158 (CCVP). Positions 35–158 (CCVPVCCCKP…CCSQSSCCVP (124 aa)) are 7 X 4 AA repeats of C-C-X-P.

Belongs to the KRTAP type 5 family. Interacts with hair keratins. In terms of tissue distribution, expressed in hair root but not in skin.

Functionally, in the hair cortex, hair keratin intermediate filaments are embedded in an interfilamentous matrix, consisting of hair keratin-associated protein (KRTAP), which are essential for the formation of a rigid and resistant hair shaft through their extensive disulfide bond cross-linking with abundant cysteine residues of hair keratins. The matrix proteins include the high-sulfur and high-glycine-tyrosine keratins. In Homo sapiens (Human), this protein is Keratin-associated protein 5-7 (KRTAP5-7).